A 395-amino-acid polypeptide reads, in one-letter code: Putative 8-amino-7-oxononanoate synthase (395 aa).

Arginine 23 provides a ligand contact to substrate. 110–111 is a binding site for pyridoxal 5'-phosphate; the sequence is GY. Residue histidine 135 coordinates substrate. Residues serine 182, 207–210, and 239–242 contribute to the pyridoxal 5'-phosphate site; these read DEAH and TFSK. N6-(pyridoxal phosphate)lysine is present on lysine 242. Threonine 356 lines the substrate pocket.

The protein belongs to the class-II pyridoxal-phosphate-dependent aminotransferase family. BioF subfamily. As to quaternary structure, homodimer. It depends on pyridoxal 5'-phosphate as a cofactor.

The enzyme catalyses 6-carboxyhexanoyl-[ACP] + L-alanine + H(+) = (8S)-8-amino-7-oxononanoate + holo-[ACP] + CO2. Its pathway is cofactor biosynthesis; biotin biosynthesis. In terms of biological role, catalyzes the decarboxylative condensation of pimeloyl-[acyl-carrier protein] and L-alanine to produce 8-amino-7-oxononanoate (AON), [acyl-carrier protein], and carbon dioxide. The polypeptide is Putative 8-amino-7-oxononanoate synthase (bioF) (Bacillus mycoides (strain KBAB4) (Bacillus weihenstephanensis)).